The following is a 160-amino-acid chain: 3-dehydroquinate dehydratase (160 aa).

Tyr28 (proton acceptor) is an active-site residue. Substrate-binding residues include Asn79, His85, and Asp92. Catalysis depends on His105, which acts as the Proton donor. Substrate-binding positions include 106-107 (MS) and Arg116.

This sequence belongs to the type-II 3-dehydroquinase family. In terms of assembly, homododecamer.

It carries out the reaction 3-dehydroquinate = 3-dehydroshikimate + H2O. The protein operates within metabolic intermediate biosynthesis; chorismate biosynthesis; chorismate from D-erythrose 4-phosphate and phosphoenolpyruvate: step 3/7. In terms of biological role, catalyzes a trans-dehydration via an enolate intermediate. The polypeptide is 3-dehydroquinate dehydratase (Gloeobacter violaceus (strain ATCC 29082 / PCC 7421)).